The sequence spans 409 residues: Dual-specificity RNA methyltransferase RlmN (409 aa).

The Proton acceptor role is filled by Glu117. Positions 128 to 377 constitute a Radical SAM core domain; the sequence is LNGRKTLCIS…CTIRQTRGDD (250 aa). Residues Cys135 and Cys382 are joined by a disulfide bond. The [4Fe-4S] cluster site is built by Cys142, Cys146, and Cys149. Residues 205–206, Ser237, 259–261, and Asn339 each bind S-adenosyl-L-methionine; these read GE and SLH. The S-methylcysteine intermediate role is filled by Cys382.

The protein belongs to the radical SAM superfamily. RlmN family. [4Fe-4S] cluster is required as a cofactor.

It is found in the cytoplasm. The catalysed reaction is adenosine(2503) in 23S rRNA + 2 reduced [2Fe-2S]-[ferredoxin] + 2 S-adenosyl-L-methionine = 2-methyladenosine(2503) in 23S rRNA + 5'-deoxyadenosine + L-methionine + 2 oxidized [2Fe-2S]-[ferredoxin] + S-adenosyl-L-homocysteine. The enzyme catalyses adenosine(37) in tRNA + 2 reduced [2Fe-2S]-[ferredoxin] + 2 S-adenosyl-L-methionine = 2-methyladenosine(37) in tRNA + 5'-deoxyadenosine + L-methionine + 2 oxidized [2Fe-2S]-[ferredoxin] + S-adenosyl-L-homocysteine. Specifically methylates position 2 of adenine 2503 in 23S rRNA and position 2 of adenine 37 in tRNAs. m2A2503 modification seems to play a crucial role in the proofreading step occurring at the peptidyl transferase center and thus would serve to optimize ribosomal fidelity. This is Dual-specificity RNA methyltransferase RlmN from Psychrobacter arcticus (strain DSM 17307 / VKM B-2377 / 273-4).